Consider the following 466-residue polypeptide: Carboxy-terminal processing protease CtpA (466 aa).

Positions 1–36 (MKRQLKLFFIVLITAVVASALTLFITGNSSILGQKS) are cleaved as a signal peptide. The PDZ domain maps to 96-174 (DETISASFEG…TKVKLELNRA (79 aa)). Catalysis depends on charge relay system residues Ser-297, Glu-308, and Lys-322.

It belongs to the peptidase S41A family.

It carries out the reaction The enzyme shows specific recognition of a C-terminal tripeptide, Xaa-Yaa-Zaa, in which Xaa is preferably Ala or Leu, Yaa is preferably Ala or Tyr, and Zaa is preferably Ala, but then cleaves at a variable distance from the C-terminus. A typical cleavage is -Ala-Ala-|-Arg-Ala-Ala-Lys-Glu-Asn-Tyr-Ala-Leu-Ala-Ala.. The polypeptide is Carboxy-terminal processing protease CtpA (ctpA) (Bacillus subtilis (strain 168)).